The chain runs to 293 residues: tRNA pseudouridine synthase B (293 aa).

Aspartate 38 acts as the Nucleophile in catalysis.

This sequence belongs to the pseudouridine synthase TruB family. Type 1 subfamily.

It carries out the reaction uridine(55) in tRNA = pseudouridine(55) in tRNA. Functionally, responsible for synthesis of pseudouridine from uracil-55 in the psi GC loop of transfer RNAs. This Trichormus variabilis (strain ATCC 29413 / PCC 7937) (Anabaena variabilis) protein is tRNA pseudouridine synthase B.